A 488-amino-acid polypeptide reads, in one-letter code: Ribulose bisphosphate carboxylase large chain (488 aa).

Residues N127 and T177 each contribute to the substrate site. The active-site Proton acceptor is the K179. Substrate is bound at residue K181. Mg(2+)-binding residues include K205, D207, and E208. Residue K205 is modified to N6-carboxylysine. The active-site Proton acceptor is H297. Substrate is bound by residues R298, H330, and S382.

It belongs to the RuBisCO large chain family. Type I subfamily. Heterohexadecamer of 8 large chains and 8 small chains. The cofactor is Mg(2+).

It localises to the plastid. The protein resides in the chloroplast. The enzyme catalyses 2 (2R)-3-phosphoglycerate + 2 H(+) = D-ribulose 1,5-bisphosphate + CO2 + H2O. It carries out the reaction D-ribulose 1,5-bisphosphate + O2 = 2-phosphoglycolate + (2R)-3-phosphoglycerate + 2 H(+). RuBisCO catalyzes two reactions: the carboxylation of D-ribulose 1,5-bisphosphate, the primary event in carbon dioxide fixation, as well as the oxidative fragmentation of the pentose substrate in the photorespiration process. Both reactions occur simultaneously and in competition at the same active site. The polypeptide is Ribulose bisphosphate carboxylase large chain (Porphyridium aerugineum (Red microalga)).